Consider the following 22-residue polypeptide: Unknown protein from spot 168 of 2D-PAGE of etiolated coleoptile (22 aa).

This Zea mays (Maize) protein is Unknown protein from spot 168 of 2D-PAGE of etiolated coleoptile.